Here is a 502-residue protein sequence, read N- to C-terminus: Lysine--tRNA ligase (502 aa).

The Mg(2+) site is built by Glu413 and Glu420.

This sequence belongs to the class-II aminoacyl-tRNA synthetase family. As to quaternary structure, homodimer. It depends on Mg(2+) as a cofactor.

The protein resides in the cytoplasm. It carries out the reaction tRNA(Lys) + L-lysine + ATP = L-lysyl-tRNA(Lys) + AMP + diphosphate. This is Lysine--tRNA ligase from Haemophilus influenzae (strain 86-028NP).